The chain runs to 292 residues: Bifunctional protein FolD (292 aa).

Residues 166-168 (GRS), serine 191, and isoleucine 232 contribute to the NADP(+) site.

This sequence belongs to the tetrahydrofolate dehydrogenase/cyclohydrolase family. As to quaternary structure, homodimer.

The enzyme catalyses (6R)-5,10-methylene-5,6,7,8-tetrahydrofolate + NADP(+) = (6R)-5,10-methenyltetrahydrofolate + NADPH. The catalysed reaction is (6R)-5,10-methenyltetrahydrofolate + H2O = (6R)-10-formyltetrahydrofolate + H(+). Its pathway is one-carbon metabolism; tetrahydrofolate interconversion. Its function is as follows. Catalyzes the oxidation of 5,10-methylenetetrahydrofolate to 5,10-methenyltetrahydrofolate and then the hydrolysis of 5,10-methenyltetrahydrofolate to 10-formyltetrahydrofolate. This chain is Bifunctional protein FolD, found in Wolbachia sp. subsp. Drosophila simulans (strain wRi).